A 516-amino-acid chain; its full sequence is Na(+)/H(+) antiporter NhaB (516 aa).

12 consecutive transmembrane segments (helical) span residues 23 to 43, 61 to 80, 97 to 117, 120 to 140, 144 to 164, 202 to 222, 238 to 258, 303 to 323, 348 to 368, 391 to 411, 447 to 467, and 475 to 495; these read LALI…PFVA, CYPL…IGMT, LLLI…LFVF, LLLG…AAAF, FLDA…FYGI, LMMH…VGEP, FFIR…LTCL, AVIG…VGLI, TEAL…AVII, LFYL…VGTV, ATPN…APLI, and VWMA…CVEF.

Belongs to the NhaB Na(+)/H(+) (TC 2.A.34) antiporter family.

The protein resides in the cell inner membrane. The catalysed reaction is 2 Na(+)(in) + 3 H(+)(out) = 2 Na(+)(out) + 3 H(+)(in). Its function is as follows. Na(+)/H(+) antiporter that extrudes sodium in exchange for external protons. In Klebsiella pneumoniae (strain 342), this protein is Na(+)/H(+) antiporter NhaB.